The sequence spans 67 residues: Bombesin (67 aa).

The first 30 residues, 1–30 (MLLLSAVKTLLLAWLGIVLVFMSIIKSAML), serve as a signal peptide directing secretion. The propeptide occupies 31-49 (DFLQEAGKLEGIETYKKEA). A Pyrrolidone carboxylic acid modification is found at glutamine 50. At methionine 64 the chain carries Methionine amide.

In terms of tissue distribution, expressed by the skin glands.

It localises to the secreted. In terms of biological role, stimulates smooth muscle contraction in isolated rat stomach strip. This Rana shuchinae (Sichuan frog) protein is Bombesin.